A 394-amino-acid polypeptide reads, in one-letter code: NAD(P)H-quinone oxidoreductase subunit H (394 aa).

Belongs to the complex I 49 kDa subunit family. In terms of assembly, NDH-1 can be composed of about 15 different subunits; different subcomplexes with different compositions have been identified which probably have different functions.

It is found in the cellular thylakoid membrane. The enzyme catalyses a plastoquinone + NADH + (n+1) H(+)(in) = a plastoquinol + NAD(+) + n H(+)(out). It carries out the reaction a plastoquinone + NADPH + (n+1) H(+)(in) = a plastoquinol + NADP(+) + n H(+)(out). In terms of biological role, NDH-1 shuttles electrons from an unknown electron donor, via FMN and iron-sulfur (Fe-S) centers, to quinones in the respiratory and/or the photosynthetic chain. The immediate electron acceptor for the enzyme in this species is believed to be plastoquinone. Couples the redox reaction to proton translocation, and thus conserves the redox energy in a proton gradient. Cyanobacterial NDH-1 also plays a role in inorganic carbon-concentration. This Prochlorococcus marinus (strain NATL2A) protein is NAD(P)H-quinone oxidoreductase subunit H.